Here is a 1006-residue protein sequence, read N- to C-terminus: Pleckstrin homology domain-containing family G member 5 (1006 aa).

Disordered stretches follow at residues 1-71 (MHYD…HTDD), 148-198 (PAKP…DILA), and 212-242 (EASIPGQEPPTPSSCSLPSGSSGSTNTGDSW). Residues 36–45 (DLEEEEEESS) are compositionally biased toward acidic residues. Basic and acidic residues-rich tracts occupy residues 151 to 165 (PGDEGKVEQGMKDSK) and 183 to 194 (ERVDAQSRRESL). Low complexity predominate over residues 224 to 242 (SSCSLPSGSSGSTNTGDSW). The DH domain occupies 336–528 (HQQEAVWELL…ERFIHHVNAC (193 aa)). The PH domain maps to 584 to 684 (QLLLEGSLRM…WVDTIYNAQN (101 aa)). Disordered stretches follow at residues 690 to 754 (RAQE…ASDG), 768 to 820 (DTLS…SAYG), and 837 to 863 (AELVPRAPESPRVPSPPPSPRLRRRTP). Acidic residues predominate over residues 704-726 (LEEEEDEQEEEEEEEEEEEEGED). Composition is skewed to polar residues over residues 727–754 (SGTSAASSPTIMRKSSGSPDSQHCASDG) and 769–785 (TLSSPEFDSGPFSSQSD). Position 729 is a phosphothreonine (threonine 729). Residue serine 734 is modified to Phosphoserine. Low complexity predominate over residues 786-803 (ETSLSTTASSATPTSELL). Positions 847-856 (PRVPSPPPSP) are enriched in pro residues. Phosphoserine is present on residues serine 851, serine 876, and serine 881. Positions 950–979 (AGSHRKRCGDLPSGASPRVQPEPPPGVSAQ) are disordered.

Interacts with GIPC1/synectin and RHOA. Predominantly expressed in the peripheral nervous system and brain. Highest expression is observed in heart, lung, kidney, testis and moderate expression is present in spleen, pancreas, skeletal muscle, ovary and liver. Weakly expressed in glioblastoma (GBM) cell lines.

The protein localises to the cytoplasm. The protein resides in the perinuclear region. It localises to the cell membrane. Its subcellular location is the cell junction. It is found in the cell projection. The protein localises to the lamellipodium. Functionally, functions as a guanine exchange factor (GEF) for RAB26 and thus regulates autophagy of synaptic vesicles in axon terminal of motoneurons. Involved in the control of neuronal cell differentiation. Plays a role in angiogenesis through regulation of endothelial cells chemotaxis. Also affects the migration, adhesion, and matrix/bone degradation in macrophages and osteoclasts. The sequence is that of Pleckstrin homology domain-containing family G member 5 (PLEKHG5) from Homo sapiens (Human).